Consider the following 290-residue polypeptide: ATP synthase gamma chain (290 aa).

It belongs to the ATPase gamma chain family. In terms of assembly, F-type ATPases have 2 components, CF(1) - the catalytic core - and CF(0) - the membrane proton channel. CF(1) has five subunits: alpha(3), beta(3), gamma(1), delta(1), epsilon(1). CF(0) has three main subunits: a, b and c.

The protein resides in the cell membrane. In terms of biological role, produces ATP from ADP in the presence of a proton gradient across the membrane. The gamma chain is believed to be important in regulating ATPase activity and the flow of protons through the CF(0) complex. This chain is ATP synthase gamma chain, found in Chloroflexus aurantiacus (strain ATCC 29366 / DSM 635 / J-10-fl).